Here is a 315-residue protein sequence, read N- to C-terminus: Methionyl-tRNA formyltransferase (315 aa).

An N-terminal domain region spans residues 2-189; that stretch reads SESLRIIFAG…LITTLKQLAD (188 aa). 113 to 116 contributes to the (6S)-5,6,7,8-tetrahydrofolate binding site; sequence SLLP. The segment at 210–315 is C-terminal domain; it reads KEEARIDWSL…EWFVPGNRLA (106 aa).

It belongs to the Fmt family.

The catalysed reaction is L-methionyl-tRNA(fMet) + (6R)-10-formyltetrahydrofolate = N-formyl-L-methionyl-tRNA(fMet) + (6S)-5,6,7,8-tetrahydrofolate + H(+). Its function is as follows. Attaches a formyl group to the free amino group of methionyl-tRNA(fMet). The formyl group appears to play a dual role in the initiator identity of N-formylmethionyl-tRNA by promoting its recognition by IF2 and preventing the misappropriation of this tRNA by the elongation apparatus. This is Methionyl-tRNA formyltransferase from Escherichia coli O6:H1 (strain CFT073 / ATCC 700928 / UPEC).